A 160-amino-acid chain; its full sequence is Biogenesis of lysosome-related organelles complex 1 subunit 5 (160 aa).

It belongs to the BLOC1S5 family. Component of the biogenesis of lysosome-related organelles complex-1 (BLOC-1) composed of Blos1, Blos2, Blos3, Blos4, Dysb, Muted, Pldn and Snapin.

Component of the biogenesis of lysosome-related organelles complex-1 (BLOC-1) involved in pigment granule biogenesis. The sequence is that of Biogenesis of lysosome-related organelles complex 1 subunit 5 from Drosophila melanogaster (Fruit fly).